Reading from the N-terminus, the 416-residue chain is Phosphoglycerate kinase (416 aa).

(2R)-3-phosphoglycerate is bound by residues Val23, Asp24, Phe25, Asn26, Gln38, Arg39, Ser62, His63, Gly65, Arg66, Leu121, Arg122, His168, and Arg169. Gly212 serves as a coordination point for ADP. Residue Gly212 participates in CDP binding. Positions 213 and 214 each coordinate AMP. ATP is bound at residue Ala213. Ala213 is a binding site for Mg(2+). Mg(2+) contacts are provided by Ala216 and Asp217. Residue Asp217 coordinates CDP. AMP is bound at residue Lys218. Lys218 is a binding site for ATP. ADP is bound at residue Gly236. Gly236 lines the CDP pocket. AMP-binding residues include Gly237 and Gly311. Gly237 and Gly311 together coordinate ATP. 2 residues coordinate CDP: Gly336 and Phe341. Phe341 is a binding site for ADP. Residue Glu342 participates in AMP binding. Residues Glu342, Asp373, and Thr374 each coordinate ATP. Residue Asp373 coordinates Mg(2+).

This sequence belongs to the phosphoglycerate kinase family. As to quaternary structure, monomer. Requires Mg(2+) as cofactor.

The protein localises to the cytoplasm. It localises to the mitochondrion. The catalysed reaction is (2R)-3-phosphoglycerate + ATP = (2R)-3-phospho-glyceroyl phosphate + ADP. It participates in carbohydrate degradation; glycolysis; pyruvate from D-glyceraldehyde 3-phosphate: step 2/5. Its function is as follows. Catalyzes one of the two ATP producing reactions in the glycolytic pathway via the reversible conversion of 1,3-diphosphoglycerate to 3-phosphoglycerate. Both L- and D- forms of purine and pyrimidine nucleotides can be used as substrates, but the activity is much lower on pyrimidines. Negatively regulates the biosynthesis of acetyl-CoA from pyruvate in the mitochondrion. This Candida glabrata (strain ATCC 2001 / BCRC 20586 / JCM 3761 / NBRC 0622 / NRRL Y-65 / CBS 138) (Yeast) protein is Phosphoglycerate kinase (PGK1).